Consider the following 217-residue polypeptide: Probable transaldolase (217 aa).

Lysine 84 functions as the Schiff-base intermediate with substrate in the catalytic mechanism.

It belongs to the transaldolase family. Type 3B subfamily.

Its subcellular location is the cytoplasm. It carries out the reaction D-sedoheptulose 7-phosphate + D-glyceraldehyde 3-phosphate = D-erythrose 4-phosphate + beta-D-fructose 6-phosphate. It participates in carbohydrate degradation; pentose phosphate pathway; D-glyceraldehyde 3-phosphate and beta-D-fructose 6-phosphate from D-ribose 5-phosphate and D-xylulose 5-phosphate (non-oxidative stage): step 2/3. Functionally, transaldolase is important for the balance of metabolites in the pentose-phosphate pathway. The protein is Probable transaldolase of Roseiflexus castenholzii (strain DSM 13941 / HLO8).